The primary structure comprises 277 residues: 3-methyl-2-oxobutanoate hydroxymethyltransferase (277 aa).

Mg(2+)-binding residues include aspartate 43 and aspartate 82. Residues 43–44 (DS), aspartate 82, and lysine 112 contribute to the 3-methyl-2-oxobutanoate site. Glutamate 114 is a Mg(2+) binding site. Glutamate 181 (proton acceptor) is an active-site residue.

Belongs to the PanB family. As to quaternary structure, homodecamer; pentamer of dimers. It depends on Mg(2+) as a cofactor.

It localises to the cytoplasm. It carries out the reaction 3-methyl-2-oxobutanoate + (6R)-5,10-methylene-5,6,7,8-tetrahydrofolate + H2O = 2-dehydropantoate + (6S)-5,6,7,8-tetrahydrofolate. It functions in the pathway cofactor biosynthesis; (R)-pantothenate biosynthesis; (R)-pantoate from 3-methyl-2-oxobutanoate: step 1/2. Its function is as follows. Catalyzes the reversible reaction in which hydroxymethyl group from 5,10-methylenetetrahydrofolate is transferred onto alpha-ketoisovalerate to form ketopantoate. The chain is 3-methyl-2-oxobutanoate hydroxymethyltransferase from Bacillus licheniformis (strain ATCC 14580 / DSM 13 / JCM 2505 / CCUG 7422 / NBRC 12200 / NCIMB 9375 / NCTC 10341 / NRRL NRS-1264 / Gibson 46).